The primary structure comprises 96 residues: Histone-like protein p6 (96 aa).

The DNA-binding element occupies 1-19 (MAKMMQREITKTTVNVAKM).

The protein belongs to the phi29likevirus histone-like protein p6 family. In terms of assembly, homodimer. Homomultimer. Binds to double-stranded DNA giving rise to multimeric nucleoprotein complexes. Binding specificity for the viral DNA is based on supercoiling, the viral genome having a negative superhelicity lower than that of plasmid DNA. Interacts with the DNA replication protein p17; this interaction optimizes the binding of protein p6 at the viral DNA ends, thus favoring the initiation of replication.

In terms of biological role, histone-like nucleoprotein that binds to the viral dsDNA and responsible for wrapping and compacting the viral DNA about 4-fold. Forms a nucleoprotein complex in which the DNA adopts a right-handed toroidal conformation winding around a protein core. Binds ito most, if not all, the viral genome, although with different affinity, the highest one corresponding to the genome ends. The formation of the nucleoprotein complex at the genome ends, activates the initiation of viral DNA replication. The binding of p6 would recruit the complex formed by the TP and the DNA polymerase to the origin. Protein p6 also represses early transcription from promoter C2, and, together with protein p4, represses transcription from promoters A2b and A2c and activates late transcription from promoter A3. Protein p6 is therefore involved in the early to late transcription switch. The formation of the nucleoprotein complex at the right end of the phage genome where the early promoter C2 is located affects local topology, which may contribute to the promoter repression. This is Histone-like protein p6 (6) from Bacillus phage PZA (Bacteriophage PZA).